Consider the following 135-residue polypeptide: Large ribosomal subunit protein uL16c (135 aa).

The tract at residues 1–20 is disordered; it reads MLSPKRTRFRKQHRGRMKGK.

This sequence belongs to the universal ribosomal protein uL16 family. Part of the 50S ribosomal subunit.

Its subcellular location is the plastid. It is found in the chloroplast. This is Large ribosomal subunit protein uL16c from Landoltia punctata (Dotted duckmeat).